We begin with the raw amino-acid sequence, 442 residues long: MDLYRKAKRLKKELSKHEEINDSLKELAFDIFKELTVKPEFIDKNTNDVIGEEKINTSTFSNKERLDILIEWTIEIDPILSFIIDKCDIPIERTGGDDLDAFMENVYTEYIEELHKLPNRKSFDSSKITKIESFAQQITKTIELYLDGYVHLAYAEFDKGMNIFSEEVNIEELLLYNIDSIRIPCKFFRMRTSNTEVFSKDDMFHIPFEKRGIIRTNRFSIPGFPCLYLGSSSLVCWEELGRPDLNTTYTSVFHLEDEDIKILDLSVSPTELADNLKKFFEITFRRKIYKFNAYFMTWILISACLIRVKKQKDIFKPEYIIPQFLLEWVKQTESSEYWGICYLSSKINRQTIENYKLYKNYAIPVRQRKDSGHCSLLGETFQISDPVAWETFQSHKDSPESLPIKNPLFPETEGTHHDYHKTELGRLEAFLIRYRSVVKDQL.

In the C-terminal section; belongs to the MbcT/ParT/Res family. In terms of assembly, forms a complex with cognate antitoxin YopB.

Functionally, may be the toxic component of a type II toxin-antitoxin (TA) system. Neutralized by its cognate antitoxin YopB. This is Putative toxin YopC (yopC) from Bacillus subtilis (strain 168).